Here is a 470-residue protein sequence, read N- to C-terminus: ATP synthase subunit beta (470 aa).

Position 158–165 (Gly-158–Thr-165) interacts with ATP.

It belongs to the ATPase alpha/beta chains family. As to quaternary structure, F-type ATPases have 2 components, CF(1) - the catalytic core - and CF(0) - the membrane proton channel. CF(1) has five subunits: alpha(3), beta(3), gamma(1), delta(1), epsilon(1). CF(0) has three main subunits: a(1), b(2) and c(9-12). The alpha and beta chains form an alternating ring which encloses part of the gamma chain. CF(1) is attached to CF(0) by a central stalk formed by the gamma and epsilon chains, while a peripheral stalk is formed by the delta and b chains.

Its subcellular location is the cell membrane. The catalysed reaction is ATP + H2O + 4 H(+)(in) = ADP + phosphate + 5 H(+)(out). Functionally, produces ATP from ADP in the presence of a proton gradient across the membrane. The catalytic sites are hosted primarily by the beta subunits. The chain is ATP synthase subunit beta from Alkalihalophilus pseudofirmus (strain ATCC BAA-2126 / JCM 17055 / OF4) (Bacillus pseudofirmus).